The following is a 441-amino-acid chain: DNA primase DnaG (441 aa).

Residues Asp-165–Pro-241 form the Toprim domain. Mg(2+) contacts are provided by Glu-171, Asp-215, and Asp-217. Residues Lys-299 to Gly-315 show a composition bias toward basic and acidic residues. The tract at residues Lys-299–Thr-320 is disordered.

The protein belongs to the archaeal DnaG primase family. Forms a ternary complex with MCM helicase and DNA. Component of the archaeal exosome complex. The cofactor is Mg(2+).

It catalyses the reaction ssDNA + n NTP = ssDNA/pppN(pN)n-1 hybrid + (n-1) diphosphate.. In terms of biological role, RNA polymerase that catalyzes the synthesis of short RNA molecules used as primers for DNA polymerase during DNA replication. Also part of the exosome, which is a complex involved in RNA degradation. Acts as a poly(A)-binding protein that enhances the interaction between heteromeric, adenine-rich transcripts and the exosome. In Ignicoccus hospitalis (strain KIN4/I / DSM 18386 / JCM 14125), this protein is DNA primase DnaG.